The primary structure comprises 526 residues: NAD(P)H-quinone oxidoreductase subunit 2 (526 aa).

Helical transmembrane passes span 16–36 (ILPE…DLIL), 43–63 (WTPY…YTQW), 80–100 (LSIA…LMSV), 110–130 (LGEF…LSGA), 133–153 (LVMI…LTGY), 168–188 (LLIG…LYGL), 212–232 (LALV…ISAV), 246–266 (PTPV…ALAI), 280–300 (WHFV…VVAL), 308–328 (LLAY…LANT), 336–356 (IFYL…VILF), 380–400 (LGLS…GFFG), 402–422 (IYLF…LGLI), and 468–488 (VGLI…NPLF).

This sequence belongs to the complex I subunit 2 family. In terms of assembly, NDH-1 can be composed of about 15 different subunits; different subcomplexes with different compositions have been identified which probably have different functions.

The protein resides in the cellular thylakoid membrane. The catalysed reaction is a plastoquinone + NADH + (n+1) H(+)(in) = a plastoquinol + NAD(+) + n H(+)(out). The enzyme catalyses a plastoquinone + NADPH + (n+1) H(+)(in) = a plastoquinol + NADP(+) + n H(+)(out). Its function is as follows. NDH-1 shuttles electrons from an unknown electron donor, via FMN and iron-sulfur (Fe-S) centers, to quinones in the respiratory and/or the photosynthetic chain. The immediate electron acceptor for the enzyme in this species is believed to be plastoquinone. Couples the redox reaction to proton translocation, and thus conserves the redox energy in a proton gradient. Cyanobacterial NDH-1 also plays a role in inorganic carbon-concentration. This Trichodesmium erythraeum (strain IMS101) protein is NAD(P)H-quinone oxidoreductase subunit 2.